A 253-amino-acid polypeptide reads, in one-letter code: Toxin PezT (253 aa).

Gly-39–Thr-46 is an ATP binding site. Residue Asp-66 is the Proton acceptor of the active site.

Belongs to the zeta toxin family. In terms of assembly, forms a PezA(2)PezT(2) heterotetramer. The heterotetramer is much more stable than either of the proteins alone, and a specific mechanism may be necessary to liberate the toxin.

The catalysed reaction is UDP-N-acetyl-alpha-D-glucosamine + ATP = UDP-N-acetyl-alpha-D-glucosamine 3'-phosphate + ADP + H(+). Its function is as follows. Toxic component of a type II toxin-antitoxin (TA) system. Phosphorylates UDP-N-acetyl-D-glucosamine (UNAG) on the 3'-hydroxyl group of the N-acetyl-D-glucosamine moiety, yielding UNAG-3P. UNAG-3P inhibits MurA, the first committed step in cell wall synthesis, which is then blocked. Upon expression in E.coli results in decreased cell growth and viability, followed 3 hours later by growth restoration; the toxic effect and phosphorylation of UNAG are neutralized by coexpression with cognate antitoxin PezA. A mutant lacking the last 11 residues is stably maintained in E.coli, unlike the wild-type which undergoes spontaneous mutation. Expression of the deletion mutant in rapidly growing liquid cultures leads to cell bulging, permeabilization and massive lysis by 1 hour. Cells that survive are not able to undergo cytokinesis. Expression in slowly growing cells leads to bulging but not lysis. Functionally, acts as a corepressor of its own operon with PezA; it is not clear if it binds DNA alone. The polypeptide is Toxin PezT (pezT) (Streptococcus pneumoniae serotype 4 (strain ATCC BAA-334 / TIGR4)).